The sequence spans 455 residues: RQC trigger complex subunit RQT4 homolog (455 aa).

Disordered regions lie at residues 64-98 (STHS…SHPS) and 118-148 (PASR…GVMT). Polar residues-rich tracts occupy residues 65–98 (THSG…SHPS) and 119–130 (ASRNKSQSNNIS). Ser-70 is modified (phosphoserine). Position 380 is a phosphoserine (Ser-380).

As to quaternary structure, component of the RQT (ribosome quality control trigger) complex.

It localises to the cytoplasm. The protein resides in the cytosol. Its function is as follows. Probably functions as part of the RQC trigger (RQT) complex that activates the ribosome quality control (RQC) pathway, a pathway that degrades nascent peptide chains during problematic translation. The polypeptide is RQC trigger complex subunit RQT4 homolog (Schizosaccharomyces pombe (strain 972 / ATCC 24843) (Fission yeast)).